A 199-amino-acid chain; its full sequence is Thioredoxin peroxidase (199 aa).

The Thioredoxin domain maps to 6–165 (AKLNHPAPHF…TLRLVKAFQF (160 aa)). Cys-52 serves as the catalytic Cysteine sulfenic acid (-SOH) intermediate. The tract at residues 179–199 (PGSKTMKADPNGSQDYFSSMN) is disordered. Residues 189–199 (NGSQDYFSSMN) show a composition bias toward polar residues.

This sequence belongs to the peroxiredoxin family. AhpC/Prx1 subfamily. In terms of assembly, homodimer; disulfide-linked, upon oxidation.

The enzyme catalyses a hydroperoxide + [thioredoxin]-dithiol = an alcohol + [thioredoxin]-disulfide + H2O. Thiol-specific peroxidase that catalyzes the reduction of hydrogen peroxide and organic hydroperoxides to water and alcohols, respectively. Plays a role in cell protection against oxidative stress by detoxifying peroxides and as sensor of hydrogen peroxide-mediated signaling events. The polypeptide is Thioredoxin peroxidase (Trypanosoma brucei rhodesiense).